The following is a 2148-amino-acid chain: MNHVTIKQSDTRADPFRVFIFGDQSSCNLSNLQLLLFKKSNVYLASFIDQVNLTLRHEIARLTAAERQSFPAFSSIQNLVARALKKDTSVALESTLATIYHLCCFLNYFGDGQEAYPTGPTTHVSGLCIGALAAAAVSSSKSLAELVQAGIDAVRVSLKVGLLVARTAALFSHQESNGASSSPWSYAVPDSQLPLALAEEAIESYQAKTNIPPLSLPYISAKGQNSWTVSGPPAIVQHFLQTSQFEKTLRLTPLAVHAPYHAPHIFSAVDVQHIMHAVGTVSNFSSKLSFISSSSSRNLPTGLKFQDLLYRAVEDILILPLDLREAAENIRLVLEATDNVQQCALFPISTGVCPSLKQSFSPAMASRVSIVDCIMERATADAGPKSTSGPKPSESKIAIIGMSGRFPESADVEAFWDLLHQGLDVHRPVPPDRYNGELYYDVTGKRKNTCKVMHGCWINDPGLFDAKFFNISPKEAEQSDPGQRLALATAYEALEAAGVVADRTPSTQRDRVGVFYGMTSDDYREVSCGQNVDTYFIPGGNRAFTPGKINYFFKYCGPSVSVDTACSSSLAAIHLACNSIWRNECDTAIAGGTNVMSNPDSFVGLDRGYFLSRTGNCHTFDDEADGYCRADAVGTVILKRLEDAIADHDPILGVISGALTNHSADAVSITRPHSGAQEEIFSKLLTESGVHPHQVSYIEMHGTGTQAGDATEMTSVLNCFAPSTSPRRLPHESLHLGSTKANVGHSESASGVSALIKVLLMMEKNIIPPHCGIKGKINHKFPTDLDQRNVHIAKTATQWNRRNEFNNIRRAFVNNFSAAGGNTALLVEDYPLLIADSSQQDARTAHVVTVSAKCIKSLKGNLENLKKFVQKQASTDGFLPKLSYTTTARRMHHPFRVAIPAANSEQLLSALDEELKHDSYTCSSESPVAFVFSGQGSQYSAMGQHLLHFTIFRDEVHAYDILAQRHGFPSIMPLIDGSVDIEDLEPLVVQLGTVCVQMALASLWMALGMRPAYVVGHSLGHYAALKVAGVLTASDTIYLVAMRARLLQNKCSRGSHAMLAIRSSAAAIQAHLDEGIHDIACINGPQDTVVSGCIDDIDRLSQKLMDKGIKATRVNVPFAFHSAQVDPILDELEAIASQVEFHTPRVAIGCPLLGRTFKAGETPSIEANHIRRHCRETVNFFDVLRSAKDEGFVSEKTAWIEIGPHTVCSNLVKANINQDIVAVPSLMRNKDGWQVLASSVATLYRHGSSVAWDEYHHDFEACKEVLRLPAYSWDNKLYWIDYVHDWLLTRGDPPVQAAASLPAPPSSFSTASVHRIVHESVDKGKLTLTAECEFTNEQLREVVYGHVVNGNRVCSSSLYTDFGVTLGSYILEKYRPDLQDHAVDVQDMVVNKALVHKEGPTMLLRIDVVLDMTDSKAASMSIYSVNSKGNKTADHAQSSLHFEQPKVWLKSWDSTQYYVERSIEWLKEKADQGLNSRMSSGVIYKLFSSLVDYSTAYKGMQEAIVNTEDFEATALVRFQVDEGNFRCNPMWVDSCGQLAGFLMNGHAKTPKDQVFINHGWQSFRTVRKFSKDKTYRTYVRMRCIEGTTYAGDVYIFDDEGIVGVCGSITFQGIPRKVLNTAMPPPKSQNEAPVRSAPAKPAAKPPKSASSEHSGHFARHSNIEPLKLDAALKSATTARNPMLAVFKIVSEEIGIPSASVDNGLVFADYGVDSLLSLSISGRLREELDLDVESSAFETCATLADLATHLGLDTFSSDQSSGQSSSSGGLSPRSDSIGEITSSATTPPSLSPRGSVSGSQCKDVCAILAEEIGVSMSEITNDTDLGALGMDSLMSLAVLSRLREELELDLEGDFFVSHPNFSSFKHMFQQGHGDEVEPEPSAELKQYRATSTLLQGNPKSALYTLFLLPDGSGSSFSYAPINAVRKDVCVFGLNCPWLKSAEKLVQFGLKGLATLYVEEIRRRAPHGPYNLGGWSAGGICAYEAAIQFTREGETVERLILLDSPNPIGLEKLPARLFDFVNGLGLFGDGKAPDWLLAHFLAFIDALDEWKPVPWDKALGGNSPPPRTYILWAEDGICKGTDARPEYRDDDPREMKWLLENRTNFGGNNWDVLLGQQSLSIERIQDANHFTMLRKGKNSERVAAFIRSTFG.

An N-terminal acylcarrier protein transacylase domain (SAT) region spans residues 19-261 (FIFGDQSSCN…TPLAVHAPYH (243 aa)). Positions 394-829 (ESKIAIIGMS…GGNTALLVED (436 aa)) constitute a Ketosynthase family 3 (KS3) domain. Catalysis depends on for beta-ketoacyl synthase activity residues Cys-566, His-701, and His-745. A malonyl-CoA:ACP transacylase (MAT) domain region spans residues 929-1233 (AFVFSGQGSQ…PSLMRNKDGW (305 aa)). The active-site For acyl/malonyl transferase activity is Ser-1018. The product template (PT) domain stretch occupies residues 1310 to 1624 (TASVHRIVHE…RKVLNTAMPP (315 aa)). The tract at residues 1314 to 1447 (HRIVHESVDK…SSLHFEQPKV (134 aa)) is N-terminal hotdog fold. The PKS/mFAS DH domain occupies 1314-1619 (HRIVHESVDK…FQGIPRKVLN (306 aa)). His-1346 functions as the Proton acceptor; for dehydratase activity in the catalytic mechanism. The tract at residues 1474-1619 (LNSRMSSGVI…FQGIPRKVLN (146 aa)) is C-terminal hotdog fold. The Proton donor; for dehydratase activity role is filled by Asp-1533. The disordered stretch occupies residues 1619–1657 (NTAMPPPKSQNEAPVRSAPAKPAAKPPKSASSEHSGHFA). Positions 1635–1650 (SAPAKPAAKPPKSASS) are enriched in low complexity. A Carrier 1 domain is found at 1678-1752 (RNPMLAVFKI…DLATHLGLDT (75 aa)). Position 1712 is an O-(pantetheine 4'-phosphoryl)serine (Ser-1712). Low complexity predominate over residues 1755–1790 (SDQSSGQSSSSGGLSPRSDSIGEITSSATTPPSLSP). The tract at residues 1755–1796 (SDQSSGQSSSSGGLSPRSDSIGEITSSATTPPSLSPRGSVSG) is disordered. A Carrier 2 domain is found at 1793-1870 (SVSGSQCKDV…SFKHMFQQGH (78 aa)). O-(pantetheine 4'-phosphoryl)serine is present on Ser-1830. Positions 1882-2146 (LKQYRATSTL…ERVAAFIRST (265 aa)) are thioesterase (TE) domain. Residue Ser-1973 is the For thioesterase activity of the active site.

In terms of biological role, polyketide synthase; part of the Pks1 gene cluster that mediates the biosynthesis of an anthraquinone derivative pigment that contributes to conidial pigmentation that provides protection from UV radiation, heat and cold stress. The polyketide synthase Pks1 produces 1-acetyl-2,4,6,8-tetrahydroxy-9,10-anthraquinone though condensation of acetyl-CoA with malonyl-CoA. The dehydratase EthD and the laccase Mlac1 further convert the anthraquinone derivative into the final conidial pigment. This chain is Polyketide synthase 1, found in Metarhizium guizhouense (strain ARSEF 977).